Here is a 141-residue protein sequence, read N- to C-terminus: Large ribosomal subunit protein uL11c (141 aa).

Belongs to the universal ribosomal protein uL11 family. In terms of assembly, part of the ribosomal stalk of the 50S ribosomal subunit. Interacts with L10 and the large rRNA to form the base of the stalk. L10 forms an elongated spine to which L12 dimers bind in a sequential fashion forming a multimeric L10(L12)X complex.

It is found in the plastid. It localises to the chloroplast. Forms part of the ribosomal stalk which helps the ribosome interact with GTP-bound translation factors. The chain is Large ribosomal subunit protein uL11c from Thalassiosira pseudonana (Marine diatom).